The sequence spans 500 residues: MIRLQTYAAFSLMATATAVYYAFSSREQFYPAMVYLSTSKICFVLLLNTGLVAMCVAWQLVKRLFLGTLREAEVERLNEQAWREVVEILFAVTIFRQDFSVSFLAMVAALLLVKALHWLAQKRVEYIETTPSVPMLSHARIVSFMLFLLVVDCLFLSNSLRSLIHKREASVAIFFSFEYMILATSTVSTFVKYIFYVSDMLMEGQWEKKAVYTFYLELISDLVHLSLYMLFFIAIFLNYGVPLHLIRELYETFRNFRIRIADYVRYRKITSNMNERFPDATADELNASDATCIICREEMTTAKKLLCGHLFHVHCLRSWLERQHTCPTCRAPILPPDNGRTAARPHGVHPGVQPVPGNGTPGSERAAGENISRRQAKLEAAASAASLYGRSFAYPPANNLNRYSTPPQSTSNGPQSGEASTSNQSPKGHATADPSAPTFYARGAVSSVTTTRELESSLQKAYENAIKSQIEMLQIQLQMFQHGATSSATNNENGEHTKSD.

The Cytoplasmic portion of the chain corresponds to 1-3; the sequence is MIR. The chain crosses the membrane as a helical span at residues 4–24; the sequence is LQTYAAFSLMATATAVYYAFS. At 25 to 40 the chain is on the lumenal side; the sequence is SREQFYPAMVYLSTSK. Residues 41–61 traverse the membrane as a helical segment; that stretch reads ICFVLLLNTGLVAMCVAWQLV. At 62–98 the chain is on the cytoplasmic side; sequence KRLFLGTLREAEVERLNEQAWREVVEILFAVTIFRQD. Residues 99-119 form a helical membrane-spanning segment; sequence FSVSFLAMVAALLLVKALHWL. Over 120–135 the chain is Lumenal; the sequence is AQKRVEYIETTPSVPM. Residues 136–156 form a helical membrane-spanning segment; that stretch reads LSHARIVSFMLFLLVVDCLFL. Residues 157-170 lie on the Cytoplasmic side of the membrane; sequence SNSLRSLIHKREAS. A helical transmembrane segment spans residues 171–191; the sequence is VAIFFSFEYMILATSTVSTFV. The Lumenal segment spans residues 192–225; it reads KYIFYVSDMLMEGQWEKKAVYTFYLELISDLVHL. A helical membrane pass occupies residues 226–246; sequence SLYMLFFIAIFLNYGVPLHLI. Topologically, residues 247–500 are cytoplasmic; sequence RELYETFRNF…NENGEHTKSD (254 aa). Residues 292–330 form an RING-type; atypical zinc finger; the sequence is CIICREEMTTAKKLLCGHLFHVHCLRSWLERQHTCPTCR. Disordered regions lie at residues 337–375 and 398–438; these read DNGR…SRRQ and NNLN…SAPT. Residues 348–358 show a composition bias toward low complexity; the sequence is VHPGVQPVPGN. Residues 398 to 426 show a composition bias toward polar residues; sequence NNLNRYSTPPQSTSNGPQSGEASTSNQSP.

It belongs to the HRD1 family.

It is found in the endoplasmic reticulum membrane. The enzyme catalyses S-ubiquitinyl-[E2 ubiquitin-conjugating enzyme]-L-cysteine + [acceptor protein]-L-lysine = [E2 ubiquitin-conjugating enzyme]-L-cysteine + N(6)-ubiquitinyl-[acceptor protein]-L-lysine.. The protein operates within protein modification; protein ubiquitination. Probable component of the HRD1 ubiquitin ligase complex that mediates the rapid degradation of misfolded endoplasmic reticulum (ER) proteins, a process called ER-associated degradation (ERAD). The protein is ERAD-associated E3 ubiquitin-protein ligase HRD1 of Oryza sativa subsp. japonica (Rice).